A 552-amino-acid chain; its full sequence is Outer dynein arm protein 1 (552 aa).

Positions 1-27 are disordered; sequence MPSADATRGGGSAGSMGKGTLGAGDTL. The segment covering 8–22 has biased composition (gly residues); it reads RGGGSAGSMGKGTLG. Coiled coils occupy residues 28-59, 120-260, and 331-395; these read GHKS…LENK, SAKE…QELL, and TLFN…YEKR. Disordered regions lie at residues 482–515 and 528–552; these read NRII…TREH and LETA…PTRR. Residues 493–506 are compositionally biased toward acidic residues; sequence QEEEVEGLEPEPVE.

Belongs to the ODA1/DCC2 family. As to quaternary structure, component of the outer dynein arm complex.

The protein localises to the cytoplasm. It is found in the cytoskeleton. The protein resides in the cilium axoneme. Component of the outer dynein arm complex required for assembly of the outer dynein arm-docking complex (ODA-DC) and the outer dynein arm onto the doublet microtubule. This Chlamydomonas reinhardtii (Chlamydomonas smithii) protein is Outer dynein arm protein 1 (ODA1).